The primary structure comprises 294 residues: MLENLSTEHRNEKTMNLDEMSIKEVLQSMNEEDRTVALAVENEIEQIEKVVQTVIKSFEEEGRLIYIGAGTSGRLGILDAVECPPTFGTDDKMVQGFIAGGLKAFTKAVEGAEDREELAEEDLKSIGLNEKDTVIGIAASGRTPYVIGGLKYANSVGASTASISCNKNAEISKYAKLNVEVETGAEILTGSTRLKAGTAQKLVLNMISTASMIGVGKVYKNLMVDVQSTNEKLIERSKRIIVEATGVSYEVAAEHYEKAERNVKAAIVMVLLQCEYGEALEKLKEAKGFVKKAL.

An SIS domain is found at valine 54–lysine 217. Residue glutamate 82 is the Proton donor of the active site. Residue glutamate 113 is part of the active site.

It belongs to the GCKR-like family. MurNAc-6-P etherase subfamily. In terms of assembly, homodimer.

It catalyses the reaction N-acetyl-D-muramate 6-phosphate + H2O = N-acetyl-D-glucosamine 6-phosphate + (R)-lactate. The protein operates within amino-sugar metabolism; N-acetylmuramate degradation. Functionally, specifically catalyzes the cleavage of the D-lactyl ether substituent of MurNAc 6-phosphate, producing GlcNAc 6-phosphate and D-lactate. This is N-acetylmuramic acid 6-phosphate etherase from Bacillus cereus (strain AH187).